We begin with the raw amino-acid sequence, 395 residues long: 1-deoxy-D-xylulose 5-phosphate reductoisomerase (395 aa).

6 residues coordinate NADPH: Thr13, Gly14, Ser15, Ile16, Lys40, and Asn127. Position 128 (Lys128) interacts with 1-deoxy-D-xylulose 5-phosphate. Glu129 serves as a coordination point for NADPH. Asp153 contributes to the Mn(2+) binding site. 4 residues coordinate 1-deoxy-D-xylulose 5-phosphate: Ser154, Glu155, Ser184, and His207. Glu155 contacts Mn(2+). Residue Gly213 participates in NADPH binding. 1-deoxy-D-xylulose 5-phosphate contacts are provided by Ser220, Asn225, Lys226, and Glu229. Glu229 is a Mn(2+) binding site.

Belongs to the DXR family. It depends on Mg(2+) as a cofactor. The cofactor is Mn(2+).

It catalyses the reaction 2-C-methyl-D-erythritol 4-phosphate + NADP(+) = 1-deoxy-D-xylulose 5-phosphate + NADPH + H(+). Its pathway is isoprenoid biosynthesis; isopentenyl diphosphate biosynthesis via DXP pathway; isopentenyl diphosphate from 1-deoxy-D-xylulose 5-phosphate: step 1/6. In terms of biological role, catalyzes the NADPH-dependent rearrangement and reduction of 1-deoxy-D-xylulose-5-phosphate (DXP) to 2-C-methyl-D-erythritol 4-phosphate (MEP). The polypeptide is 1-deoxy-D-xylulose 5-phosphate reductoisomerase (Nitrosospira multiformis (strain ATCC 25196 / NCIMB 11849 / C 71)).